We begin with the raw amino-acid sequence, 1001 residues long: Serine/threonine-protein kinase TAO1 (1001 aa).

Serine 9 bears the Phosphoserine mark. The Protein kinase domain occupies 28–281; the sequence is FTDLREIGHG…SEELLKHMFV (254 aa). Residues 34–42 and lysine 57 each bind ATP; that span reads IGHGSFGAV. Aspartate 151 serves as the catalytic Proton acceptor. 2 disordered regions span residues 324–380 and 404–433; these read PAVE…DKSE and ENYQ…SHYR. Low complexity predominate over residues 350-370; sequence SNQSIPSMSISASSQSSSVNS. Phosphoserine occurs at positions 421 and 445. A coiled-coil region spans residues 458–651; it reads SELREQMSGY…QTQKDLEHAM (194 aa). Residues 567 to 587 form a disordered region; it reads KEELNENQSTPKKEKQEWLSK. Basic and acidic residues predominate over residues 577-587; the sequence is PKKEKQEWLSK. Position 669 is a phosphothreonine (threonine 669). Residues 754-877 are a coiled coil; the sequence is KAVLKRLKEE…LERQAREIEA (124 aa). The segment at 905 to 1001 is disordered; it reads PGASSWSHNP…ISNGSHMSYT (97 aa). Over residues 921 to 930 the composition is skewed to low complexity; that stretch reads HWGHPMGGTP. Residue serine 965 is modified to Phosphoserine. Positions 975 to 1001 are enriched in polar residues; sequence GGRTEQGMSRSTSVTSQISNGSHMSYT.

It belongs to the protein kinase superfamily. STE Ser/Thr protein kinase family. STE20 subfamily. Self-associates. Interacts with MAP2K3. Interacts with SPRED1. Interacts with TESK1; the interaction inhibits TAOK1 kinase activity. Interacts with MAP3K7. Proteolytically processed by caspase-3 (CASP3). In terms of processing, autophosphorylated. Phosphorylated by ATM in response to DNA damage. Phosphorylated by LRRK2.

Its subcellular location is the cytoplasm. It carries out the reaction L-seryl-[protein] + ATP = O-phospho-L-seryl-[protein] + ADP + H(+). It catalyses the reaction L-threonyl-[protein] + ATP = O-phospho-L-threonyl-[protein] + ADP + H(+). With respect to regulation, serine/threonine-protein kinase activity is inhibited by SPRED1. In terms of biological role, serine/threonine-protein kinase involved in various processes such as p38/MAPK14 stress-activated MAPK cascade, DNA damage response and regulation of cytoskeleton stability. Phosphorylates MAP2K3, MAP2K6 and MARK2. Acts as an activator of the p38/MAPK14 stress-activated MAPK cascade by mediating phosphorylation and subsequent activation of the upstream MAP2K3 and MAP2K6 kinases. Involved in G-protein coupled receptor signaling to p38/MAPK14. In response to DNA damage, involved in the G2/M transition DNA damage checkpoint by activating the p38/MAPK14 stress-activated MAPK cascade, probably by mediating phosphorylation of MAP2K3 and MAP2K6. Acts as a regulator of cytoskeleton stability by phosphorylating 'Thr-208' of MARK2, leading to activate MARK2 kinase activity and subsequent phosphorylation and detachment of MAPT/TAU from microtubules. Also acts as a regulator of apoptosis: regulates apoptotic morphological changes, including cell contraction, membrane blebbing and apoptotic bodies formation via activation of the MAPK8/JNK cascade. During fetal development, it plays an essential role in the regulation of neuronal differentiation and migration to the cortical plate. In Mus musculus (Mouse), this protein is Serine/threonine-protein kinase TAO1 (Taok1).